Here is a 168-residue protein sequence, read N- to C-terminus: Small ribosomal subunit protein uS5 (168 aa).

The S5 DRBM domain occupies 12–75 (YQEKLVSVTR…DQAKKNMVYI (64 aa)).

This sequence belongs to the universal ribosomal protein uS5 family. Part of the 30S ribosomal subunit. Contacts proteins S4 and S8.

Functionally, with S4 and S12 plays an important role in translational accuracy. In terms of biological role, located at the back of the 30S subunit body where it stabilizes the conformation of the head with respect to the body. In Legionella pneumophila (strain Paris), this protein is Small ribosomal subunit protein uS5.